Here is a 542-residue protein sequence, read N- to C-terminus: Cytochrome P450 monooxygenase 91 (542 aa).

The N-terminal stretch at 1 to 22 (MLDILRFVLICGILWILRRVLL) is a signal peptide. Asn299 and Asn392 each carry an N-linked (GlcNAc...) asparagine glycan. Heme is bound at residue Cys482.

Belongs to the cytochrome P450 family. Heme serves as cofactor.

The protein operates within secondary metabolite biosynthesis. Cytochrome P450 monooxygenase that is able to use dehydroabietic acid as a substrate for oxidation. The chain is Cytochrome P450 monooxygenase 91 from Postia placenta (strain ATCC 44394 / Madison 698-R) (Brown rot fungus).